The sequence spans 259 residues: Global transcriptional regulator CodY (259 aa).

Residues 1 to 155 are GAF domain; the sequence is MNLLAKTRKL…GATVVGMEIL (155 aa). A DNA-binding region (H-T-H motif) is located at residues 203-222; sequence ASKIADRVGITRSVIVNALR.

Belongs to the CodY family.

It localises to the cytoplasm. Functionally, DNA-binding global transcriptional regulator which is involved in the adaptive response to starvation and acts by directly or indirectly controlling the expression of numerous genes in response to nutrient availability. During rapid exponential growth, CodY is highly active and represses genes whose products allow adaptation to nutrient depletion. This Exiguobacterium sibiricum (strain DSM 17290 / CCUG 55495 / CIP 109462 / JCM 13490 / 255-15) protein is Global transcriptional regulator CodY.